Reading from the N-terminus, the 252-residue chain is 5'-nucleotidase SurE (252 aa).

The a divalent metal cation site is built by D8, D9, S39, and N91.

The protein belongs to the SurE nucleotidase family. The cofactor is a divalent metal cation.

Its subcellular location is the cytoplasm. The enzyme catalyses a ribonucleoside 5'-phosphate + H2O = a ribonucleoside + phosphate. In terms of biological role, nucleotidase that shows phosphatase activity on nucleoside 5'-monophosphates. The polypeptide is 5'-nucleotidase SurE (Bordetella avium (strain 197N)).